The sequence spans 420 residues: Phosphoglycerate kinase (420 aa).

14 residues coordinate (2R)-3-phosphoglycerate: valine 26, aspartate 27, tyrosine 28, asparagine 29, glutamine 42, arginine 43, serine 66, histidine 67, glycine 69, arginine 70, leucine 125, arginine 126, histidine 173, and arginine 174. A Phosphotyrosine modification is found at tyrosine 199. Serine 206 bears the Phosphoserine mark. The tract at residues 209–228 (KPFLAILGGAKVSDKIKLIE) is calmodulin binding. Glycine 217 lines the ADP pocket. Glycine 217 contacts CDP. The AMP site is built by alanine 218 and lysine 219. Alanine 218 provides a ligand contact to ATP. Alanine 218 is a Mg(2+) binding site. Residue aspartate 222 coordinates CDP. Aspartate 222 serves as a coordination point for Mg(2+). Lysine 223 lines the AMP pocket. Residue lysine 223 participates in ATP binding. Residue glycine 241 coordinates ADP. CDP is bound at residue glycine 241. Residues glycine 242 and glycine 316 each contribute to the AMP site. Residues glycine 242 and glycine 316 each contribute to the ATP site. Positions 341 and 346 each coordinate CDP. Phenylalanine 346 serves as a coordination point for ADP. Glutamate 347 is a binding site for AMP. ATP-binding residues include glutamate 347, aspartate 378, and threonine 379. Aspartate 378 is a Mg(2+) binding site. Position 393 is a phosphoserine (serine 393).

This sequence belongs to the phosphoglycerate kinase family. Monomer. Interacts with calmodulin in the presence of Ca(2+). Mg(2+) serves as cofactor.

It is found in the cytoplasm. The catalysed reaction is (2R)-3-phosphoglycerate + ATP = (2R)-3-phospho-glyceroyl phosphate + ADP. It participates in carbohydrate degradation; glycolysis; pyruvate from D-glyceraldehyde 3-phosphate: step 2/5. This is Phosphoglycerate kinase from Dictyostelium discoideum (Social amoeba).